We begin with the raw amino-acid sequence, 193 residues long: Signal peptidase I (193 aa).

The Cytoplasmic segment spans residues 1–25; it reads MTEEQKPTSEKSVKRKSNTYWEWGK. A helical transmembrane segment spans residues 26–42; sequence AIIIAVALALLIRHFLF. The Extracellular segment spans residues 43-193; that stretch reads EPYLVEGSSM…FPFHDMRQTK (151 aa). Residues serine 51 and lysine 93 contribute to the active site.

It belongs to the peptidase S26 family.

It is found in the cell membrane. It catalyses the reaction Cleavage of hydrophobic, N-terminal signal or leader sequences from secreted and periplasmic proteins.. This chain is Signal peptidase I (sipS2), found in Bacillus amyloliquefaciens (Bacillus velezensis).